The chain runs to 915 residues: Transferrin-binding protein A (915 aa).

The first 24 residues, 1 to 24, serve as a signal peptide directing secretion; sequence MQQQHLFRLNILCLSLMTALPAYA. Positions 38 to 45 match the TonB box motif; the sequence is DTIQVKAK. Residues 51 to 176 form the TBDR plug domain; it reads RDNEVTGLGK…LAGSVAFQTK (126 aa). The 729-residue stretch at 187 to 915 folds into the TBDR beta-barrel domain; sequence QWGIQSKTAY…NYTFSLEMKF (729 aa). The span at 526–540 shows a compositional bias: polar residues; that stretch reads LKTPPQNNGKKTSPN. Residues 526–545 form a disordered region; that stretch reads LKTPPQNNGKKTSPNGREKN. Residues 898 to 915 carry the TonB C-terminal box motif; the sequence is NRYAAPGRNYTFSLEMKF.

It belongs to the TonB-dependent receptor family. In terms of assembly, binds both human apo- and holo-transferrin (TF), via the TF C-terminus. Forms a large complex with TF and TbpB.

It is found in the cell outer membrane. Its function is as follows. Neisseria acquires iron by extracting it from serum transferrin (TF) in its human host. Acts as a TF receptor and is required for TF utilization. Binds both apo- and holo-TF, via the TF C-terminus. The sequence is that of Transferrin-binding protein A from Neisseria gonorrhoeae.